Reading from the N-terminus, the 333-residue chain is Mitochondrial glycine transporter (333 aa).

The disordered stretch occupies residues 1–25 (MTNAATDKSVASVARDVSTGKPGKS). Solcar repeat units lie at residues 26-109 (PDAA…MRAA), 127-220 (LLPM…FKND), and 236-319 (RSSV…LIKS). Transmembrane regions (helical) follow at residues 32 to 57 (LLSGGLAGLTSAVTLQPFDLLKTRLQ), 84 to 110 (GAVPSALRTSVGAGLYFTTLSKMRAAV), 133 to 158 (LATGFVARAIVGYITMPITMVKTRFE), 195 to 218 (GSVATLARDCPYAGLYVLFYEGFK), 240 to 266 (INSSSAILAASVSTTITAPFDAIKTRL), and 294 to 312 (GLSLRFGRKALSAGISWCI).

This sequence belongs to the mitochondrial carrier (TC 2.A.29) family. SLC25A38 subfamily.

Its subcellular location is the mitochondrion inner membrane. The catalysed reaction is glycine(in) = glycine(out). In terms of biological role, mitochondrial glycine transporter that imports glycine into the mitochondrial matrix. Plays an important role in providing glycine for the first enzymatic step in heme biosynthesis, the condensation of glycine with succinyl-CoA to produce 5-aminolevulinate (ALA) in the mitochondrial matrix. The chain is Mitochondrial glycine transporter from Scheffersomyces stipitis (strain ATCC 58785 / CBS 6054 / NBRC 10063 / NRRL Y-11545) (Yeast).